A 428-amino-acid polypeptide reads, in one-letter code: Elongation factor 1-alpha (428 aa).

One can recognise a tr-type G domain in the interval 5–217; sequence KPHVNIVFIG…DQIPEPEKPV (213 aa). The segment at 14-21 is G1; that stretch reads GHVDHGKS. Residue 14–21 participates in GTP binding; the sequence is GHVDHGKS. Ser-21 lines the Mg(2+) pocket. Residues 68-72 form a G2 region; that stretch reads GITID. Residues 89–92 form a G3 region; sequence DAPG. Residues 89-93 and 144-147 contribute to the GTP site; these read DAPGH and NKMD. The segment at 144 to 147 is G4; the sequence is NKMD. Positions 181 to 183 are G5; sequence SAW.

It belongs to the TRAFAC class translation factor GTPase superfamily. Classic translation factor GTPase family. EF-Tu/EF-1A subfamily.

Its subcellular location is the cytoplasm. The enzyme catalyses GTP + H2O = GDP + phosphate + H(+). Functionally, GTP hydrolase that promotes the GTP-dependent binding of aminoacyl-tRNA to the A-site of ribosomes during protein biosynthesis. The polypeptide is Elongation factor 1-alpha (Pyrococcus abyssi (strain GE5 / Orsay)).